The sequence spans 40 residues: Metallothionein-1 (40 aa).

It belongs to the metallothionein superfamily. Type 5 family.

Its function is as follows. This protein binds cations of several transition elements. It is thought to be involved in detoxification processes. The chain is Metallothionein-1 (MtnA) from Drosophila melanogaster (Fruit fly).